Here is a 422-residue protein sequence, read N- to C-terminus: Isocitrate dehydrogenase [NADP] (422 aa).

An NADP(+)-binding site is contributed by threonine 94. 5 residues coordinate D-threo-isocitrate: serine 103, asparagine 105, arginine 109, arginine 119, and arginine 143. Position 310 (aspartate 310) interacts with Mg(2+). Residues 344-350 (HGTAPKY), asparagine 357, tyrosine 396, and arginine 400 each bind NADP(+).

Belongs to the isocitrate and isopropylmalate dehydrogenases family. As to quaternary structure, homodimer. Mg(2+) serves as cofactor. The cofactor is Mn(2+).

It carries out the reaction D-threo-isocitrate + NADP(+) = 2-oxoglutarate + CO2 + NADPH. Catalyzes the oxidative decarboxylation of isocitrate to 2-oxoglutarate and carbon dioxide with the concomitant reduction of NADP(+). The sequence is that of Isocitrate dehydrogenase [NADP] (icd) from Staphylococcus aureus (strain COL).